Here is a 530-residue protein sequence, read N- to C-terminus: Bifunctional purine biosynthesis protein PurH (530 aa).

The MGS-like domain maps to 1-148 (MNNARPIRRA…KNHKDVTIVV (148 aa)).

The protein belongs to the PurH family.

It carries out the reaction (6R)-10-formyltetrahydrofolate + 5-amino-1-(5-phospho-beta-D-ribosyl)imidazole-4-carboxamide = 5-formamido-1-(5-phospho-D-ribosyl)imidazole-4-carboxamide + (6S)-5,6,7,8-tetrahydrofolate. It catalyses the reaction IMP + H2O = 5-formamido-1-(5-phospho-D-ribosyl)imidazole-4-carboxamide. Its pathway is purine metabolism; IMP biosynthesis via de novo pathway; 5-formamido-1-(5-phospho-D-ribosyl)imidazole-4-carboxamide from 5-amino-1-(5-phospho-D-ribosyl)imidazole-4-carboxamide (10-formyl THF route): step 1/1. It functions in the pathway purine metabolism; IMP biosynthesis via de novo pathway; IMP from 5-formamido-1-(5-phospho-D-ribosyl)imidazole-4-carboxamide: step 1/1. The chain is Bifunctional purine biosynthesis protein PurH from Aliivibrio fischeri (strain MJ11) (Vibrio fischeri).